The sequence spans 406 residues: uncharacterized protein (406 aa).

The next 5 helical transmembrane spans lie at 7-27 (LCTNPLIILIGTYMSIKYYLF), 31-51 (YFNIQFGLYVTFIISLLYGSV), 65-85 (LIFILHVLFVLICFSIKSEII), 92-112 (IFYFGFVKTIIISVVIGSFIL), and 191-211 (ISLIKMYLYSVIVPYAISSFF). A disordered region spans residues 259–331 (TLNVPISTNN…TGTNNNVVDN (73 aa)). The segment covering 262–291 (VPISTNNTDNLNSVKTNQQFNTPVAKSNTK) has biased composition (polar residues). The span at 292–303 (SNRRKKTGKKIR) shows a compositional bias: basic residues. A compositionally biased stretch (low complexity) spans 306-318 (NQTTSSNSSNNQS). Over residues 319–330 (PESTGTNNNVVD) the composition is skewed to polar residues.

The protein localises to the membrane. This is an uncharacterized protein from Acanthamoeba polyphaga (Amoeba).